The sequence spans 105 residues: NADH-quinone oxidoreductase subunit K (105 aa).

3 helical membrane-spanning segments follow: residues 9–29 (PNYY…GVLV), 34–54 (IVLF…LVTF), and 65–85 (IMAF…LAII).

Belongs to the complex I subunit 4L family. NDH-1 is composed of 14 different subunits. Subunits NuoA, H, J, K, L, M, N constitute the membrane sector of the complex.

It localises to the cell membrane. It catalyses the reaction a quinone + NADH + 5 H(+)(in) = a quinol + NAD(+) + 4 H(+)(out). Its function is as follows. NDH-1 shuttles electrons from NADH, via FMN and iron-sulfur (Fe-S) centers, to quinones in the respiratory chain. The immediate electron acceptor for the enzyme in this species is believed to be a menaquinone. Couples the redox reaction to proton translocation (for every two electrons transferred, four hydrogen ions are translocated across the cytoplasmic membrane), and thus conserves the redox energy in a proton gradient. The polypeptide is NADH-quinone oxidoreductase subunit K (Salinispora tropica (strain ATCC BAA-916 / DSM 44818 / JCM 13857 / NBRC 105044 / CNB-440)).